Consider the following 345-residue polypeptide: 3-isopropylmalate dehydrogenase (345 aa).

Position 74–87 (74–87) interacts with NAD(+); the sequence is GPKWDGLPRKIRPE. The substrate site is built by R94, R104, R132, and D217. Mg(2+) contacts are provided by D217, D241, and D245. 274–286 is an NAD(+) binding site; it reads GSAPDIAGKGLAN.

Belongs to the isocitrate and isopropylmalate dehydrogenases family. LeuB type 1 subfamily. In terms of assembly, homodimer. Mg(2+) is required as a cofactor. The cofactor is Mn(2+).

It localises to the cytoplasm. The enzyme catalyses (2R,3S)-3-isopropylmalate + NAD(+) = 4-methyl-2-oxopentanoate + CO2 + NADH. It functions in the pathway amino-acid biosynthesis; L-leucine biosynthesis; L-leucine from 3-methyl-2-oxobutanoate: step 3/4. In terms of biological role, catalyzes the oxidation of 3-carboxy-2-hydroxy-4-methylpentanoate (3-isopropylmalate) to 3-carboxy-4-methyl-2-oxopentanoate. The product decarboxylates to 4-methyl-2 oxopentanoate. In Thermus thermophilus (strain ATCC BAA-163 / DSM 7039 / HB27), this protein is 3-isopropylmalate dehydrogenase (leuB).